The following is a 114-amino-acid chain: Large ribosomal subunit protein bL17 (114 aa).

This sequence belongs to the bacterial ribosomal protein bL17 family. In terms of assembly, part of the 50S ribosomal subunit. Contacts protein L32.

This is Large ribosomal subunit protein bL17 from Elusimicrobium minutum (strain Pei191).